The following is a 323-amino-acid chain: ATP synthase gamma chain (323 aa).

A disordered region spans residues 215 to 237; sequence PAGGPAKEQEQGDEGGHGAPSAA. The span at 221 to 230 shows a compositional bias: basic and acidic residues; sequence KEQEQGDEGG.

The protein belongs to the ATPase gamma chain family. In terms of assembly, F-type ATPases have 2 components, CF(1) - the catalytic core - and CF(0) - the membrane proton channel. CF(1) has five subunits: alpha(3), beta(3), gamma(1), delta(1), epsilon(1). CF(0) has three main subunits: a, b and c.

Its subcellular location is the cell inner membrane. Functionally, produces ATP from ADP in the presence of a proton gradient across the membrane. The gamma chain is believed to be important in regulating ATPase activity and the flow of protons through the CF(0) complex. The sequence is that of ATP synthase gamma chain from Sorangium cellulosum (strain So ce56) (Polyangium cellulosum (strain So ce56)).